Reading from the N-terminus, the 1052-residue chain is Kinesin-like protein KIF11 (1052 aa).

A Kinesin motor domain is found at 17–358 (NIQVVVRCRP…LEYAHRAKNI (342 aa)). An ATP-binding site is contributed by 104–111 (GQTGTGKT). Lys-145 is modified (N6-acetyllysine). Positions 364–478 (VNQKLTKKAL…ETKLQLVKEE (115 aa)) form a coiled coil. Thr-457 is modified (phosphothreonine). Lys-476 participates in a covalent cross-link: Glycyl lysine isopeptide (Lys-Gly) (interchain with G-Cter in SUMO2). Thr-925 carries the post-translational modification Phosphothreonine. 2 disordered regions span residues 950-1026 (LQKK…LNPV) and 1033-1052 (EASD…SINL). Residues 963–988 (EASKETSQDMDEEREALEQCTEELVS) are a coiled coil. Basic and acidic residues predominate over residues 1016-1026 (KDKENRGLNPV).

It belongs to the TRAFAC class myosin-kinesin ATPase superfamily. Kinesin family. BimC subfamily. In terms of assembly, interacts with the thyroid hormone receptor in the presence of thyroid hormone. Component of a large chromatin remodeling complex, at least composed of MYSM1, PCAF, RBM10 and KIF11/TRIP5. Interacts with RARRES1 and AGBL2. In terms of processing, phosphorylated exclusively on serine during S phase, but on both serine and Thr-925 during mitosis, so controlling the association of KIF11 with the spindle apparatus (probably during early prophase).

It is found in the cytoplasm. The protein localises to the cytoskeleton. It localises to the spindle pole. Its function is as follows. Motor protein required for establishing a bipolar spindle during mitosis. Required in non-mitotic cells for transport of secretory proteins from the Golgi complex to the cell surface. This is Kinesin-like protein KIF11 (Kif11) from Mus musculus (Mouse).